A 244-amino-acid polypeptide reads, in one-letter code: Probable phosphatase CA_C0509 (244 aa).

Residues His-8, His-10, His-16, His-41, Glu-74, His-102, His-132, Asp-193, and His-195 each contribute to the Zn(2+) site.

This sequence belongs to the PHP family. Zn(2+) is required as a cofactor.

The chain is Probable phosphatase CA_C0509 from Clostridium acetobutylicum (strain ATCC 824 / DSM 792 / JCM 1419 / IAM 19013 / LMG 5710 / NBRC 13948 / NRRL B-527 / VKM B-1787 / 2291 / W).